The primary structure comprises 570 residues: Repressible high-affinity phosphate permease (570 aa).

The Cytoplasmic segment spans residues M1–D61. A helical membrane pass occupies residues S62–G82. The Extracellular segment spans residues E83–K95. The helical transmembrane segment at L96–F116 threads the bilayer. Residues G117–S120 lie on the Cytoplasmic side of the membrane. Residues M121 to G141 traverse the membrane as a helical segment. Residues S142 to P143 lie on the Extracellular side of the membrane. A helical transmembrane segment spans residues S144–G164. Topologically, residues D165–M186 are cytoplasmic. The chain crosses the membrane as a helical span at residues G187–V207. The Extracellular segment spans residues T208–R237. The helical transmembrane segment at T238–P258 threads the bilayer. Topologically, residues E259 to N325 are cytoplasmic. Residues A326–V346 form a helical membrane-spanning segment. Residues S347 to T374 are Extracellular-facing. The chain crosses the membrane as a helical span at residues A375 to F395. Over T396 to K403 the chain is Cytoplasmic. The helical transmembrane segment at P404–Y424 threads the bilayer. The Extracellular portion of the chain corresponds to K425–L433. The helical transmembrane segment at A434–V454 threads the bilayer. The Cytoplasmic portion of the chain corresponds to P455 to H468. The helical transmembrane segment at G469 to L489 threads the bilayer. Residues R490–N505 lie on the Extracellular side of the membrane. A helical membrane pass occupies residues H506–P526. At E527–A570 the chain is on the cytoplasmic side. The span at S537–E546 shows a compositional bias: acidic residues. Residues S537–A570 are disordered. Positions E547–E560 are enriched in basic and acidic residues. The span at A561 to A570 shows a compositional bias: polar residues.

This sequence belongs to the major facilitator superfamily. Sugar transporter (TC 2.A.1.1) family.

It localises to the cell membrane. With respect to regulation, phosphate transport activity is competitively inhibited by arsenate. In terms of biological role, high-affinity transporter for external inorganic phosphate. Acts probably as a H(+)-phosphate symporter. The polypeptide is Repressible high-affinity phosphate permease (Neurospora crassa (strain ATCC 24698 / 74-OR23-1A / CBS 708.71 / DSM 1257 / FGSC 987)).